Reading from the N-terminus, the 900-residue chain is Translation initiation factor IF-2 (900 aa).

Disordered stretches follow at residues 30 to 77 (GEFV…SLDK) and 89 to 291 (NGKA…YDSM). The span at 89–112 (NGKATAAPAKAADSGGAAIVSPTT) shows a compositional bias: low complexity. Residues 113–129 (PAAPEPPTAVPPSPQAP) show a composition bias toward pro residues. Over residues 175–187 (PGTARPGVPRPGA) the composition is skewed to low complexity. Positions 215-271 (GRPGAPGAGRSDAGGGNYRGGGVGAAPGTGFRGRPGGGGGGRPGQRGGAAGAFGRPG) are enriched in gly residues. The span at 275-284 (RRGRKSKRQK) shows a compositional bias: basic residues. The tr-type G domain occupies 396 to 567 (VRPPVVTVMG…AVLLTADAAL (172 aa)). Residues 405–412 (GHVDHGKT) form a G1 region. 405–412 (GHVDHGKT) is a GTP binding site. Positions 430 to 434 (GITQH) are G2. Residues 455–458 (DTPG) form a G3 region. Residues 455 to 459 (DTPGH) and 509 to 512 (NKID) each bind GTP. The interval 509 to 512 (NKID) is G4. The interval 545–547 (SAK) is G5.

This sequence belongs to the TRAFAC class translation factor GTPase superfamily. Classic translation factor GTPase family. IF-2 subfamily.

The protein localises to the cytoplasm. One of the essential components for the initiation of protein synthesis. Protects formylmethionyl-tRNA from spontaneous hydrolysis and promotes its binding to the 30S ribosomal subunits. Also involved in the hydrolysis of GTP during the formation of the 70S ribosomal complex. The polypeptide is Translation initiation factor IF-2 (Mycobacterium bovis (strain BCG / Pasteur 1173P2)).